The sequence spans 611 residues: tRNA uridine 5-carboxymethylaminomethyl modification enzyme MnmG (611 aa).

12 to 17 (GGGHSG) lines the FAD pocket. Residue 271–285 (GPRYCPSIEEKVYRF) coordinates NAD(+).

This sequence belongs to the MnmG family. As to quaternary structure, homodimer. Heterotetramer of two MnmE and two MnmG subunits. The cofactor is FAD.

It localises to the cytoplasm. Its function is as follows. NAD-binding protein involved in the addition of a carboxymethylaminomethyl (cmnm) group at the wobble position (U34) of certain tRNAs, forming tRNA-cmnm(5)s(2)U34. In Karelsulcia muelleri (strain GWSS) (Sulcia muelleri), this protein is tRNA uridine 5-carboxymethylaminomethyl modification enzyme MnmG.